A 662-amino-acid chain; its full sequence is Hypoxia-inducible factor 3-alpha (662 aa).

The interval 1–25 (MDWDQDRSNTELRKEKSRDAARSRR) is disordered. In terms of domain architecture, bHLH spans 12–65 (LRKEKSRDAARSRRSQETEVLYQLAHTLPFARGVSAHLDKASIMRLTISYLRMH). Positions 75–98 (QVEKGGEPLDACYLKALEGFVMVL) are nuclear localization signal (isoform 2). PAS domains lie at 80 to 150 (GEPL…PNLS) and 225 to 295 (PHPA…LSKG). The tract at residues 228-272 (ASLEPPLGRGAFLSRHSLDMKFTYCDERIAEVAGYSPDDLIGCSA) is nuclear export signal (isoform 2). Disordered regions lie at residues 352–377 (EQTE…GNSV) and 416–446 (PILD…DLPD). The LRRLL signature appears at 414–418 (MAPIL). Residues 426-437 (TPSTPQATRRPQ) are compositionally biased toward low complexity. Residues 448–581 (LTVGLENAHR…SEDKGLELLE (134 aa)) are ODD. Positions 450–501 (VGLENAHRLSTAQKNKTVETDLDIAQDPDTLDLEMLAPYISMDDDFQLNSSE) are NTAD. Residue K463 forms a Glycyl lysine isopeptide (Lys-Gly) (interchain with G-Cter in ubiquitin) linkage. The LAPYISMD motif lies at 485 to 492 (LAPYISMD). P487 is subject to 4-hydroxyproline. A disordered region spans residues 500–595 (SEQLPKVHRR…KRSPRLEPGS (96 aa)). Residues 505–521 (KVHRRPPRVARRPRARS) show a composition bias toward basic residues. A Glycyl lysine isopeptide (Lys-Gly) (interchain with G-Cter in ubiquitin) cross-link involves residue K565. The segment covering 572-584 (SEDKGLELLETKP) has biased composition (basic and acidic residues).

In terms of assembly, isoform 1 interacts with ARNT. Isoform 2 interacts with HIF1A. Isoform 2 interacts EPAS1. Isoform 2 interacts (via C-terminus domain) with BAD; the interaction reduces the binding between BAD and BAX. Isoform 2 (via C-terminus domain) interacts with BCL2L2 and MCL1. Interacts with VHL. Post-translationally, in normoxia, hydroxylated on Pro-487 in the oxygen-dependent degradation domain (ODD) by PHD. The hydroxylated proline promotes interaction with VHL, initiating rapid ubiquitination and subsequent proteasomal degradation. In terms of processing, ubiquitinated; ubiquitination occurs in a VHL- and oxygen-dependent pathway and subsequently targeted for proteasomal degradation. In terms of tissue distribution, isoform 3 is expressed in endothelial cells of vessels and capillaries in alveoli of the neonatal lung (at protein level). Expressed in lung, brain, heart and kidney. Isoform 2 is expressed in heart and lung. Isoform 2 is highly expressed in the epithelial cell layer of the cornea with lower expression in the layers of ganglion cells, inner nuclear cells, and rods and cones of the retina. Isoform 2 is expressed in the cerebellum only in the Purkinje cell layer.

It localises to the nucleus. The protein resides in the cytoplasm. Its subcellular location is the nucleus speckle. It is found in the mitochondrion. Acts as a transcriptional regulator in adaptive response to low oxygen tension. Acts as a regulator of hypoxia-inducible gene expression. Plays a role in the development of the cardiorespiratory system. In terms of biological role, acts as a positive regulator of hypoxia-inducible gene expression. Associates to core DNA sequence 5'-TACGTG-3' within the hypoxia response element (HRE) of target gene promoters in a ARNT-dependent manner, and hence also participates in the transcriptional activation of reporter genes driven by HRE. Its function is as follows. Attenuates the ability of transcription factor HIF1A, EPAS1 and the HIF1A-ARNT complex to bind to hypoxia-responsive elements (HRE) located within the enhancer/promoter of hypoxia-inducible target genes and hence inhibits HRE-driven transcriptional activation. Functions as an inhibitor of angiogenesis in hypoxic cells of the cornea. May act as a tumor suppressor. May also be involved in apoptosis. Functionally, attenuates the ability of transcription factor HIF1A, EPAS1 and the HIF1A-ARNT complex to bind to hypoxia-responsive elements (HRE) located within the enhancer/promoter of hypoxia-inducible target genes and hence inhibits HRE-driven transcriptional activation. Also plays a role in the development of the lung and heart during embryonic and neonatal stages. In Mus musculus (Mouse), this protein is Hypoxia-inducible factor 3-alpha.